The following is a 414-amino-acid chain: Tyrosine--tRNA ligase (414 aa).

Position 35 (Tyr35) interacts with L-tyrosine. The short motif at Pro40–His49 is the 'HIGH' region element. L-tyrosine is bound by residues Tyr164 and Gln168. Residues Lys226 to Thr230 carry the 'KMSKS' region motif. An ATP-binding site is contributed by Lys229. The 68-residue stretch at Thr347–Lys414 folds into the S4 RNA-binding domain.

This sequence belongs to the class-I aminoacyl-tRNA synthetase family. TyrS type 1 subfamily. Homodimer.

Its subcellular location is the cytoplasm. It catalyses the reaction tRNA(Tyr) + L-tyrosine + ATP = L-tyrosyl-tRNA(Tyr) + AMP + diphosphate + H(+). Functionally, catalyzes the attachment of tyrosine to tRNA(Tyr) in a two-step reaction: tyrosine is first activated by ATP to form Tyr-AMP and then transferred to the acceptor end of tRNA(Tyr). The sequence is that of Tyrosine--tRNA ligase from Mycoplasma capricolum subsp. capricolum (strain California kid / ATCC 27343 / NCTC 10154).